The primary structure comprises 240 residues: tRNA (guanine-N(1)-)-methyltransferase (240 aa).

Residues glycine 111 and 130 to 135 (IGDYVI) each bind S-adenosyl-L-methionine.

The protein belongs to the RNA methyltransferase TrmD family. In terms of assembly, homodimer.

It localises to the cytoplasm. The catalysed reaction is guanosine(37) in tRNA + S-adenosyl-L-methionine = N(1)-methylguanosine(37) in tRNA + S-adenosyl-L-homocysteine + H(+). Its function is as follows. Specifically methylates guanosine-37 in various tRNAs. This Mycoplasma mycoides subsp. mycoides SC (strain CCUG 32753 / NCTC 10114 / PG1) protein is tRNA (guanine-N(1)-)-methyltransferase.